The chain runs to 1755 residues: BCL-6 corepressor (1755 aa).

The disordered stretch occupies residues 309-345; that stretch reads NSKQPRVPSAKAVTSGLPGDTALLLPPSPRPSPRVHL. Phosphoserine occurs at positions 336, 340, 365, and 367. Residues 388–438 are disordered; that stretch reads LSNGKYPKAPEGGEGAQPVPGHARKTAVQDRKDGSSPPLLEKQTVTKDVTD. Lys-392 carries the post-translational modification N6-acetyllysine. A Phosphoserine modification is found at Ser-423. Positions 498-514 are interaction with BCL6; it reads RSEIISTAPSSWVVPGP. Positions 557-578 are enriched in low complexity; the sequence is VSGSVSSAGRPASASPAPNANA. 4 disordered regions span residues 557–641, 737–760, 773–794, and 815–844; these read VSGS…IFLS, ITKEEKPERRSRSHERARYEDPTL, TKLHPDVPTDKNLKPNPNWNQG, and AKTDTNVSKPSFAAESVGQSAEPPKPSVEP. The segment covering 580 to 594 has biased composition (polar residues); it reads GTKTSRSSVETTPSV. Over residues 605 to 620 the composition is skewed to low complexity; sequence PAKHSSSTSSKGAKAS. Residues 775-785 are compositionally biased toward basic and acidic residues; it reads LHPDVPTDKNL. Lys-786 is covalently cross-linked (Glycyl lysine isopeptide (Lys-Gly) (interchain with G-Cter in SUMO2)). Residue Lys-872 forms a Glycyl lysine isopeptide (Lys-Gly) (interchain with G-Cter in SUMO2) linkage. Disordered stretches follow at residues 1071–1187 and 1220–1328; these read IAEQ…EDPH and QQVS…KENQ. Residues 1076-1107 show a composition bias toward basic and acidic residues; the sequence is ESERCEYSVGNKHRDPFEAPEDKDLPVEKYFV. Residues Ser-1127 and Ser-1139 each carry the phosphoserine modification. Basic and acidic residues predominate over residues 1166 to 1175; sequence SKDDWPEREM. A compositionally biased stretch (polar residues) spans 1238–1252; it reads TQATQPEAIPQGTNI. A compositionally biased stretch (basic and acidic residues) spans 1253 to 1279; sequence TEEKPGRKRAEAKGNRSWSEESLKPSD. Residue Lys-1256 forms a Glycyl lysine isopeptide (Lys-Gly) (interchain with G-Cter in SUMO2) linkage. Residues Ser-1290, Ser-1345, and Ser-1410 each carry the phosphoserine modification. Lys-1413 is covalently cross-linked (Glycyl lysine isopeptide (Lys-Gly) (interchain with G-Cter in SUMO2)). The segment covering 1430–1447 has biased composition (polar residues); it reads QSTQLPCSSSPQETTQSR. Residues 1430–1451 form a disordered region; sequence QSTQLPCSSSPQETTQSRPMPP. ANK repeat units follow at residues 1462–1495, 1496–1525, and 1529–1558; these read AGETLLQRAARLGYEEVVLYCLENKICDVNHRDN, AGYCALHEACARGWLNIVRHLLEYGADVNC, and DGTRPLHDAVENDHLEIVRLLLSYGADPTL. Positions 1634 to 1748 are necessary and sufficient for interaction with PCGF1; sequence SDVFEFEFSE…SSVEWLHPSD (115 aa).

Belongs to the BCOR family. In terms of assembly, interacts with BCL6; the interaction is direct. Forms ternary complexes with BCL6 and SMRT/NCOR2 on selected target genes promoters; potently repress expression. Can interact with HDAC1, HDAC3 and HDAC5. Interacts with PCGF1; the interaction is direct. Interacts with KDM2B. Component of an approximately 800 kDa repressive BCOR complex at least composed of BCOR, RYBP, PCGF1, RING1, RNF2/RING2, KDM2B and SKP1. Interacts with CPNE4 (via VWFA domain). Isoform 1 may interact with MLLT3/AF9. In terms of tissue distribution, ubiquitously expressed.

It localises to the nucleus. Transcriptional corepressor. May specifically inhibit gene expression when recruited to promoter regions by sequence-specific DNA-binding proteins such as BCL6 and MLLT3. This repression may be mediated at least in part by histone deacetylase activities which can associate with this corepressor. Involved in the repression of TFAP2A; impairs binding of BCL6 and KDM2B to TFAP2A promoter regions. Via repression of TFAP2A acts as a negative regulator of osteo-dentiogenic capacity in adult stem cells; the function implies inhibition of methylation on histone H3 'Lys-4' (H3K4me3) and 'Lys-36' (H3K36me2). This chain is BCL-6 corepressor (BCOR), found in Homo sapiens (Human).